The primary structure comprises 266 residues: Phosphatidylserine decarboxylase proenzyme (266 aa).

Residues Asp74, His135, and Ser237 each act as charge relay system; for autoendoproteolytic cleavage activity in the active site. Catalysis depends on Ser237, which acts as the Schiff-base intermediate with substrate; via pyruvic acid; for decarboxylase activity. Ser237 is modified (pyruvic acid (Ser); by autocatalysis).

It belongs to the phosphatidylserine decarboxylase family. PSD-B subfamily. Prokaryotic type I sub-subfamily. In terms of assembly, heterodimer of a large membrane-associated beta subunit and a small pyruvoyl-containing alpha subunit. The cofactor is pyruvate. In terms of processing, is synthesized initially as an inactive proenzyme. Formation of the active enzyme involves a self-maturation process in which the active site pyruvoyl group is generated from an internal serine residue via an autocatalytic post-translational modification. Two non-identical subunits are generated from the proenzyme in this reaction, and the pyruvate is formed at the N-terminus of the alpha chain, which is derived from the carboxyl end of the proenzyme. The autoendoproteolytic cleavage occurs by a canonical serine protease mechanism, in which the side chain hydroxyl group of the serine supplies its oxygen atom to form the C-terminus of the beta chain, while the remainder of the serine residue undergoes an oxidative deamination to produce ammonia and the pyruvoyl prosthetic group on the alpha chain. During this reaction, the Ser that is part of the protease active site of the proenzyme becomes the pyruvoyl prosthetic group, which constitutes an essential element of the active site of the mature decarboxylase.

Its subcellular location is the cell membrane. It catalyses the reaction a 1,2-diacyl-sn-glycero-3-phospho-L-serine + H(+) = a 1,2-diacyl-sn-glycero-3-phosphoethanolamine + CO2. Its pathway is phospholipid metabolism; phosphatidylethanolamine biosynthesis; phosphatidylethanolamine from CDP-diacylglycerol: step 2/2. Its function is as follows. Catalyzes the formation of phosphatidylethanolamine (PtdEtn) from phosphatidylserine (PtdSer). The chain is Phosphatidylserine decarboxylase proenzyme from Campylobacter jejuni subsp. jejuni serotype O:2 (strain ATCC 700819 / NCTC 11168).